The chain runs to 445 residues: NADH-quinone oxidoreductase subunit F (445 aa).

NAD(+) is bound at residue 61 to 70 (GRGGAGFSTG). 174-221 (GAGRYICGEETALINSLEGRRANPRSKPPFPATSGVWGKPTCVNNVET) provides a ligand contact to FMN. Cys351, Cys354, Cys357, and Cys398 together coordinate [4Fe-4S] cluster.

The protein belongs to the complex I 51 kDa subunit family. As to quaternary structure, composed of 13 different subunits. Subunits NuoCD, E, F, and G constitute the peripheral sector of the complex. It depends on FMN as a cofactor. [4Fe-4S] cluster is required as a cofactor.

It carries out the reaction a quinone + NADH + 5 H(+)(in) = a quinol + NAD(+) + 4 H(+)(out). In terms of biological role, NDH-1 shuttles electrons from NADH, via FMN and iron-sulfur (Fe-S) centers, to quinones in the respiratory chain. The immediate electron acceptor for the enzyme in this species is believed to be ubiquinone. Couples the redox reaction to proton translocation (for every two electrons transferred, four hydrogen ions are translocated across the cytoplasmic membrane), and thus conserves the redox energy in a proton gradient. The protein is NADH-quinone oxidoreductase subunit F (nuoF) of Salmonella typhimurium (strain LT2 / SGSC1412 / ATCC 700720).